The sequence spans 231 residues: Two-component response regulator ORR1 (231 aa).

The 127-residue stretch at 9 to 135 folds into the Response regulatory domain; it reads RVLLVDDSPV…DVQRLRNCSP (127 aa). At Asp68 the chain carries 4-aspartylphosphate.

Belongs to the ARR family. Type-A subfamily. Post-translationally, two-component system major event consists of a His-to-Asp phosphorelay between a sensor histidine kinase (HK) and a response regulator (RR). In plants, the His-to-Asp phosphorelay involves an additional intermediate named Histidine-containing phosphotransfer protein (HPt). This multistep phosphorelay consists of a His-Asp-His-Asp sequential transfer of a phosphate group between first a His and an Asp of the HK protein, followed by the transfer to a conserved His of the HPt protein and finally the transfer to an Asp in the receiver domain of the RR protein. In terms of tissue distribution, expressed in roots, leaf blades, leaf sheaths, shoot apex, flowers and panicles.

Functionally, functions as a response regulator involved in His-to-Asp phosphorelay signal transduction system. Phosphorylation of the Asp residue in the receiver domain activates the ability of the protein to promote the transcription of target genes. Type-A response regulators seem to act as negative regulators of the cytokinin signaling. Involved in adventitious (crown) root initiation under the regulation of CRL5. This is Two-component response regulator ORR1 from Oryza sativa subsp. japonica (Rice).